Reading from the N-terminus, the 417-residue chain is Probable histone-binding protein lin-53 (417 aa).

WD repeat units lie at residues 118-158 (NHEG…AVPR), 170-210 (GHTK…NVAG), 220-260 (GHES…PGHC), 263-303 (AHSA…MKLH), 307-347 (SHRD…EDQS), and 364-404 (GHTA…YNEV).

Belongs to the WD repeat RBAP46/RBAP48/MSI1 family. In terms of assembly, binds directly to helix 1 of the histone fold of histone H4, a region that is not accessible when H4 is in chromatin. Probable component of a NuRD-like complex, composed of at least lin-53 and hda-1. Interacts with lin-35. Interacts with hda-1; the interaction is direct. Component of the DRM complex, at least composed of lin-9, lin-35, lin-37, lin-52, lin-53, lin-54- dpl-1 and efl-1. Interacts with hcp-3.

It is found in the nucleus. The protein localises to the chromosome. The protein resides in the centromere. Core histone-binding subunit that may target chromatin assembly factors, chromatin remodeling factors and histone deacetylases to their histone substrates in a manner that is regulated by nucleosomal DNA. Required for hcp-3 and his-1 stabilization, localization of hcp-3 to centromeres and for proper chromosome segregation. Synthetic multivulva class B (synMuvB) protein. SynMuvB proteins are required to repress the induction of vulval development by Ras signaling and probably act by forming the multiprotein DRM complex that represses transcription. The protein is Probable histone-binding protein lin-53 of Caenorhabditis elegans.